We begin with the raw amino-acid sequence, 658 residues long: Threonine--tRNA ligase (658 aa).

The region spanning 1-64 (MLNSVSLTFP…GKSGKVEIIT (64 aa)) is the TGS domain. Positions 246 to 549 (DHRKLGREMD…LIENYSGHFP (304 aa)) are catalytic. Zn(2+)-binding residues include cysteine 343, histidine 394, and histidine 526.

Belongs to the class-II aminoacyl-tRNA synthetase family. Homodimer. Zn(2+) is required as a cofactor.

The protein resides in the cytoplasm. The enzyme catalyses tRNA(Thr) + L-threonine + ATP = L-threonyl-tRNA(Thr) + AMP + diphosphate + H(+). Functionally, catalyzes the attachment of threonine to tRNA(Thr) in a two-step reaction: L-threonine is first activated by ATP to form Thr-AMP and then transferred to the acceptor end of tRNA(Thr). Also edits incorrectly charged L-seryl-tRNA(Thr). The chain is Threonine--tRNA ligase from Mesorhizobium japonicum (strain LMG 29417 / CECT 9101 / MAFF 303099) (Mesorhizobium loti (strain MAFF 303099)).